The sequence spans 344 residues: Glyceraldehyde-3-phosphate dehydrogenase (344 aa).

Residues 11–12 (TI) and Gly-110 each bind NAD(+). 139-141 (SCN) contacts D-glyceraldehyde 3-phosphate. The active-site Nucleophile is Cys-140. Arg-169 lines the NAD(+) pocket. 195–196 (HG) contributes to the D-glyceraldehyde 3-phosphate binding site. An NAD(+)-binding site is contributed by Gln-302.

The protein belongs to the glyceraldehyde-3-phosphate dehydrogenase family. Homotetramer.

It localises to the cytoplasm. The enzyme catalyses D-glyceraldehyde 3-phosphate + phosphate + NADP(+) = (2R)-3-phospho-glyceroyl phosphate + NADPH + H(+). The catalysed reaction is D-glyceraldehyde 3-phosphate + phosphate + NAD(+) = (2R)-3-phospho-glyceroyl phosphate + NADH + H(+). Its pathway is carbohydrate degradation; glycolysis; pyruvate from D-glyceraldehyde 3-phosphate: step 1/5. This is Glyceraldehyde-3-phosphate dehydrogenase from Pyrobaculum calidifontis (strain DSM 21063 / JCM 11548 / VA1).